The chain runs to 563 residues: Calnexin homolog (563 aa).

An N-terminal signal peptide occupies residues 1–23 (MRFNAAITGALVSSATLMGQAHA). At 24–493 (EETEKKADAT…PINAVKQVPE (470 aa)) the chain is on the lumenal side. D98 contributes to the Ca(2+) binding site. A disulfide bridge links C141 with C175. Y145, K147, Y166, and D173 together coordinate an alpha-D-glucoside. N-linked (GlcNAc...) asparagine glycosylation is present at N236. Residues 241–323 (EDFAPPVNPE…EKPEDWDDEE (83 aa)) are disordered. Residues 249 to 279 (PEKEIDDPKDKKPADWVDEAKIPDPEAKKPD) show a composition bias toward basic and acidic residues. Residues 253–386 (IDDPKDKKPA…RKIPNPAYFE (134 aa)) form a p domain (Extended arm) region. Over residues 280–305 (DWDEDAPYEIVDEEATMPEDWLEDEP) the composition is skewed to acidic residues. The cysteines at positions 337 and 343 are disulfide-linked. Residue E402 participates in an alpha-D-glucoside binding. D413 is a Ca(2+) binding site. The helical transmembrane segment at 494-514 (VAGGLGALLLTMILVIVGAVG) threads the bilayer. Over 515 to 563 (ASSPAPAAAAKKGKEAASAAKEKASEAVSSAADTAKGAATKRNTRSSAQ) the chain is Cytoplasmic. Residues 521–563 (AAAAKKGKEAASAAKEKASEAVSSAADTAKGAATKRNTRSSAQ) are disordered. Over residues 526 to 539 (KGKEAASAAKEKAS) the composition is skewed to basic and acidic residues.

It belongs to the calreticulin family.

The protein resides in the endoplasmic reticulum membrane. Its function is as follows. Interacts with newly synthesized monoglucosylated glycoproteins in the endoplasmic reticulum. It may act in assisting protein assembly and/or in the retention within the ER of unassembled protein subunits. It seems to play a major role in the quality control apparatus of the ER by the retention of incorrectly folded proteins. The polypeptide is Calnexin homolog (Aspergillus fumigatus (strain ATCC MYA-4609 / CBS 101355 / FGSC A1100 / Af293) (Neosartorya fumigata)).